We begin with the raw amino-acid sequence, 1170 residues long: Anion exchange protein 3 (1170 aa).

Residues 1 to 656 (MGRSYNEKDF…DLKDALDTQC (656 aa)) lie on the Cytoplasmic side of the membrane. Disordered regions lie at residues 17–96 (FHHT…PQLS), 112–167 (FHME…TTRG), and 239–267 (HLVK…RRKR). The segment covering 32–53 (RFRKRVLSMDRRRKRKRKKKKT) has biased composition (basic residues). Acidic residues predominate over residues 67 to 76 (VDEEEAESEI). Residues 246–259 (RCQLPRSSNGSPPL) are compositionally biased toward polar residues. Transmembrane regions (helical) follow at residues 657-677 (IAAV…FGGL), 702-722 (FSLL…LLVF), 744-764 (IGFW…SFLV), 774-794 (IFAF…LIKV), and 828-848 (PNTA…AFFL). Positions 657–1170 (IAAVIFIYFA…DEYNEIHMLV (514 aa)) are membrane (anion exchange). The Cytoplasmic portion of the chain corresponds to 849-863 (RKLRNSRFLGGKVRR). Helical transmembrane passes span 864-884 (VIGD…DILI), 919-939 (FPVW…ILIF), 966-986 (LLLI…WLTA), 1020-1063 (RVTG…LTGI), and 1104-1124 (IVLL…FILI).

The protein belongs to the anion exchanger (TC 2.A.31) family. As to expression, widely expressed at low levels.

Its subcellular location is the cell membrane. The catalysed reaction is hydrogencarbonate(in) + chloride(out) = hydrogencarbonate(out) + chloride(in). Its function is as follows. Sodium-independent anion exchanger which mediates the electroneutral exchange of chloride for bicarbonate ions across the cell membrane. May be involved in the regulation of intracellular pH, and the modulation of cardiac action potential. This is Anion exchange protein 3 from Danio rerio (Zebrafish).